Here is a 144-residue protein sequence, read N- to C-terminus: 3-hydroxyacyl-[acyl-carrier-protein] dehydratase FabZ (144 aa).

Residue histidine 51 is part of the active site.

Belongs to the thioester dehydratase family. FabZ subfamily.

It localises to the cytoplasm. It carries out the reaction a (3R)-hydroxyacyl-[ACP] = a (2E)-enoyl-[ACP] + H2O. Functionally, involved in unsaturated fatty acids biosynthesis. Catalyzes the dehydration of short chain beta-hydroxyacyl-ACPs and long chain saturated and unsaturated beta-hydroxyacyl-ACPs. The polypeptide is 3-hydroxyacyl-[acyl-carrier-protein] dehydratase FabZ (fabZ1) (Enterococcus faecalis (strain ATCC 700802 / V583)).